A 908-amino-acid chain; its full sequence is UPF0182 protein NT01CX_0852 (908 aa).

The next 7 membrane-spanning stretches (helical) occupy residues 8 to 28, 47 to 67, 96 to 116, 157 to 177, 209 to 229, 253 to 273, and 280 to 300; these read IGLFFCIALTVIFLKKIVNVI, FTSVISLFILVFLICFVAIKT, IINALTLIISLFIALNFSLGY, LLSLLILLAVITVIVYMFLNI, LAILGALLLLCISVGYLIKAW, FYIAISIVSIISSIIVAFSIL, and IISCVILIAVLVISERVVSGA.

It belongs to the UPF0182 family.

Its subcellular location is the cell membrane. This Clostridium novyi (strain NT) protein is UPF0182 protein NT01CX_0852.